The chain runs to 125 residues: MWARVLKLICEELGDRELFLLEADKDLKWFGAPVKEVCEKVNFDARNSEIAQTVKASLQEVQGEGWIVYVDPFNNFADIYEANKPRYRNRWNQERPYDISETRFRVGFFPSREEAYDSSSRFQRE.

This is an uncharacterized protein from Aquifex aeolicus (strain VF5).